The chain runs to 271 residues: Serine O-acetyltransferase (271 aa).

Cys112 acts as the Acyl-thioester intermediate in catalysis. Catalysis depends on His204, which acts as the Proton acceptor. The active site involves Glu206.

The protein belongs to the MetA family.

The catalysed reaction is L-serine + acetyl-CoA = O-acetyl-L-serine + CoA. The protein operates within amino-acid biosynthesis; L-cysteine biosynthesis; L-cysteine from L-serine: step 1/2. Its function is as follows. Catalyzes the formation of O-acetylserine (OAS) from L-serine and acetyl-CoA. To a lesser extent, is also able to use succinyl-CoA and propionyl-CoA as acyl donors, but not butyryl-CoA. Does not acylate D-serine and L-homoserine. This is Serine O-acetyltransferase from Lacticaseibacillus casei (Lactobacillus casei).